The chain runs to 98 residues: Toxin ParE1 (98 aa).

Belongs to the RelE toxin family.

Functionally, toxic component of a type II toxin-antitoxin (TA) system. Its toxic effect is neutralized by coexpression with cognate antitoxin ParD1. This Mycobacterium tuberculosis (strain CDC 1551 / Oshkosh) protein is Toxin ParE1 (parE1).